The primary structure comprises 508 residues: Cytochrome P450 monooxygenase dmxR5 (508 aa).

Residues 24-44 (LTLGLGAILVVLMSFLAFLSY) traverse the membrane as a helical segment. N-linked (GlcNAc...) asparagine glycans are attached at residues asparagine 387 and asparagine 405. A heme-binding site is contributed by cysteine 451. N-linked (GlcNAc...) asparagine glycosylation is present at asparagine 462. The tract at residues 481-508 (EHKKSTQESGHGVPLPSKLSKFSPREEN) is disordered.

This sequence belongs to the cytochrome P450 family. It depends on heme as a cofactor.

Its subcellular location is the membrane. The protein operates within secondary metabolite biosynthesis. In terms of biological role, cytochrome P450 monooxygenase; part of the gene cluster that mediates the biosynthesis of the dimeric xanthones cryptosporioptides. The pathway begins with the synthesis of atrochrysone thioester by the polyketide synthase dmx-nrPKS. The atrochrysone carboxyl ACP thioesterase dmxR1 then breaks the thioester bond and releases the atrochrysone carboxylic acid from dmx-nrPKS. Atrochrysone carboxylic acid is decarboxylated by the decarboxylase dmxR15, and oxidized by the anthrone oxygenase dmxR16 to yield emodin. Emodin is then reduced to emodin hydroquinone by the oxidoreductase dmxR7. A-ring reduction by the short chain dehydrogenase dmxR18, dehydration by the scytalone dehydratase-like protein dmxR17 and probable spontaneous re-oxidation, results in overall deoxygenation to chrysophanol. Baeyer-Villiger oxidation by the Baeyer-Villiger monooxygenase (BVMO) dmxR6 then yields monodictylactone in equilibrium with monodictyphenone. In the case of the cryptosporioptides biosynthesis, monodictylactone is reduced at C-12 to an alcohol (by the short chain dehydrogenases dmxR12 or dmxR8) and hydroxylated at C-5 by dmxR9, yielding the electron-rich aromatic which could eliminate H(2)O to form the ortho-quinonemethide, followed by tautomerisation to paraquinone and complete the formal reduction to produce the 10-methylgroup. Conjugate addition of C-4a-OH to the resulting paraquinone by the monooxygenase dmxR10 then gives cyclohexadienone, which is then reduced at C-5 by the short chain dehydrogenase dmxR3 to give the dihydroxanthone. The 6,7-epoxide in the cryptosporioptides could be introduced by the cytochrome P450 monooxygenase dmxL3. The highly reducing PKS dmxL2 manufactures butyrate, which is further carboxylated by dmxL1 to form ethylmalonate. It is not yet clear whether the carboxylation occurs while the butyrate is attached to the ACP of dmxL2, but this unusual fungal metabolite could then be esterified to O-5 by the O-acetyltransferase dmxR13. Finally, dimerization performed by dmxR5 gives the observed dimers cryptosporioptides A, B and C as the final products of the pathway. The polypeptide is Cytochrome P450 monooxygenase dmxR5 (Cryptosporiopsis sp. (strain 8999)).